The chain runs to 333 residues: 1,5-anhydro-D-fructose reductase (333 aa).

Residues 9 to 12, 33 to 34, Arg38, 71 to 76, 93 to 94, Asn120, 162 to 163, and Tyr283 each bind NADP(+); these read ASTI, SS, TTNELH, EK, and WR.

The protein belongs to the Gfo/Idh/MocA family. As to quaternary structure, monomer.

The catalysed reaction is 1,5-anhydro-D-mannitol + NADP(+) = 1,5-anhydro-D-fructose + NADPH + H(+). Its function is as follows. Catalyzes the NADPH-specific reduction of 1,5-anhydro-D-fructose to 1,5-anhydro-D-mannitol. This chain is 1,5-anhydro-D-fructose reductase (afr), found in Rhizobium meliloti (strain 1021) (Ensifer meliloti).